Consider the following 575-residue polypeptide: GBF-interacting protein 1-like (575 aa).

2 disordered regions span residues 66-171 (SKRE…SKSD) and 229-296 (SSSN…VVHS). Polar residues-rich tracts occupy residues 90–102 (FASS…SGRN), 115–138 (TRGS…NETK), and 161–171 (ISASRCSSKSD). The segment covering 268-281 (AREETSTVSEDKDY) has biased composition (basic and acidic residues).

It belongs to the GIP1 family. In terms of tissue distribution, expressed in roots, leaves, stems and flowers.

It localises to the nucleus. In terms of biological role, may act as a transcriptional coactivator of LOB domain-containing proteins. This is GBF-interacting protein 1-like from Arabidopsis thaliana (Mouse-ear cress).